The primary structure comprises 60 residues: Large ribosomal subunit protein bL32 (60 aa).

Belongs to the bacterial ribosomal protein bL32 family.

This Persephonella marina (strain DSM 14350 / EX-H1) protein is Large ribosomal subunit protein bL32.